Consider the following 359-residue polypeptide: Phospho-N-acetylmuramoyl-pentapeptide-transferase (359 aa).

The next 10 membrane-spanning stretches (helical) occupy residues 3–23 (QIMI…PALI), 55–75 (VAIL…GLAF), 80–100 (ITAS…VGFL), 117–137 (TAKT…VLQF), 156–176 (IATV…VVSA), 187–207 (LDGL…LITF), 231–251 (LALI…WNAA), 255–275 (IFMG…LSVT), 280–300 (ILAV…VLQI), and 334–354 (FWLL…GEWL).

It belongs to the glycosyltransferase 4 family. MraY subfamily. Mg(2+) is required as a cofactor.

Its subcellular location is the cell membrane. The catalysed reaction is UDP-N-acetyl-alpha-D-muramoyl-L-alanyl-gamma-D-glutamyl-meso-2,6-diaminopimeloyl-D-alanyl-D-alanine + di-trans,octa-cis-undecaprenyl phosphate = di-trans,octa-cis-undecaprenyl diphospho-N-acetyl-alpha-D-muramoyl-L-alanyl-D-glutamyl-meso-2,6-diaminopimeloyl-D-alanyl-D-alanine + UMP. It participates in cell wall biogenesis; peptidoglycan biosynthesis. Functionally, catalyzes the initial step of the lipid cycle reactions in the biosynthesis of the cell wall peptidoglycan: transfers peptidoglycan precursor phospho-MurNAc-pentapeptide from UDP-MurNAc-pentapeptide onto the lipid carrier undecaprenyl phosphate, yielding undecaprenyl-pyrophosphoryl-MurNAc-pentapeptide, known as lipid I. In Mycobacterium ulcerans (strain Agy99), this protein is Phospho-N-acetylmuramoyl-pentapeptide-transferase.